Here is a 668-residue protein sequence, read N- to C-terminus: Spartin (668 aa).

M1 bears the N-acetylmethionine mark. An MIT domain is found at 16–94 (IKEAYKKAFV…LQNVRTRLEI (79 aa)). A disordered region spans residues 110–176 (VPKLYPEFPP…PSEAPPAYTP (67 aa)). Over residues 118-127 (PPKDMSEKSP) the composition is skewed to basic and acidic residues. S126 carries the post-translational modification Phosphoserine. A compositionally biased stretch (low complexity) spans 128–162 (EPQSLSSLPQHSEVNGSTSTASAESSSTPTTLSLP). The tract at residues 190 to 380 (ESGEFSSVGE…QLDPSSKDVR (191 aa)) is ubiquitin-binding region (UBR) domain. The LC3-interacting region (LIR); mediates interaction with MAP1LC3A AND MAP1LC3C signature appears at 193–200 (EFSSVGEN). The disordered stretch occupies residues 348–396 (FQIPGISGSASDQLKEASGTDVRQLDPSSKDVRQKGKRGKKTKGTSSEE). A Glycyl lysine isopeptide (Lys-Gly) (interchain with G-Cter in ubiquitin) cross-link involves residue K362. The Senescence domain maps to 427 to 611 (ILSGASWVSW…YNIDNIGIKA (185 aa)). Residues 431-503 (ASWVSWGLVK…LVDGVCTVAN (73 aa)) form a required for localization to lipid droplets region. Phosphoserine is present on S470. The interval 631–668 (IDNSKGENPGGGASANLKGEKDEQKEGPEKNGAKKKDK) is disordered. Over residues 648 to 668 (KGEKDEQKEGPEKNGAKKKDK) the composition is skewed to basic and acidic residues.

As to quaternary structure, interacts with ITCH and WWP1. Interacts (via MIT domain) with IST1; leading to the recruitment of SPART to midbodies. Interacts with MAP1LC3A and MAP1LC3C. Ubiquitinated; ubiquitination does not require ITCH and WWP1.

The protein localises to the cytoplasm. The protein resides in the midbody. It localises to the lipid droplet. Lipophagy receptor that plays an important role in lipid droplet (LD) turnover in motor neurons. Localizes to LDs and interacts with components of the autophagy machinery, such as MAP1LC3A/C proteins to deliver LDs to autophagosomes for degradation via lipophagy. Lipid transfer protein required for lipid droplet degradation, including by lipophagy. Can bind and transfer all lipid species found in lipid droplets, from phospholipids to triglycerides and sterol esters but the direction of lipid transfer by spartin and its cargos are unknown. May be implicated in endosomal trafficking, or microtubule dynamics, or both. Participates in cytokinesis. The polypeptide is Spartin (Bos taurus (Bovine)).